Consider the following 698-residue polypeptide: 4-hydroxybutyrate--CoA ligase [ADP-forming] (698 aa).

The ATP-grasp domain maps to 491 to 544; the sequence is QEVLKAYGLPLPKSTLAKNEAEAVKAAKKIGYPVVMKIASPQIIHKSDAGGVKV. 517 to 544 contributes to the ATP binding site; sequence AKKIGYPVVMKIASPQIIHKSDAGGVKV.

In the N-terminal section; belongs to the acetate CoA ligase alpha subunit family. It in the C-terminal section; belongs to the acetate CoA ligase beta subunit family. Mg(2+) serves as cofactor. The cofactor is Mn(2+).

The enzyme catalyses 4-hydroxybutanoate + ATP + CoA = 4-hydroxybutanoyl-CoA + ADP + phosphate. Involved in thaumarchaeal hydroxypropionate/hydroxybutyrate (HP/HB) cycle, a modified version of the autotrophic HP/HB cycle of Crenarchaeota. Catalyzes the formation of 4-hydroxybutyryl-CoA, ADP and phosphate from 4-hydroxybutyrate, coenzyme A (CoA) and ATP. Can also use acetate, propionate and butyrate, with poor catalytic efficiency. This is 4-hydroxybutyrate--CoA ligase [ADP-forming] from Nitrosopumilus maritimus (strain SCM1).